An 849-amino-acid polypeptide reads, in one-letter code: DNA mismatch repair protein MutS (849 aa).

602–609 (GPNMSGKS) is a binding site for ATP.

This sequence belongs to the DNA mismatch repair MutS family.

Its function is as follows. This protein is involved in the repair of mismatches in DNA. It is possible that it carries out the mismatch recognition step. This protein has a weak ATPase activity. The sequence is that of DNA mismatch repair protein MutS from Streptococcus mutans serotype c (strain ATCC 700610 / UA159).